Consider the following 187-residue polypeptide: Accessory gene regulator protein B (187 aa).

Helical transmembrane passes span 49–69, 82–102, 106–126, 144–164, and 166–186; these read ISIF…YMLI, ILCY…LINI, FTYL…YAPA, LSII…PFYA, and FMLL…FPKE.

It belongs to the AgrB family.

The protein resides in the cell membrane. Its function is as follows. Essential for the production of a quorum sensing system signal molecule, the autoinducing peptide (AIP). This quorum sensing system is responsible for the regulation of the expression of virulence factor genes. Involved in the proteolytic processing of AgrD, the precursor of AIP. The polypeptide is Accessory gene regulator protein B (Staphylococcus aureus (strain Mu50 / ATCC 700699)).